The chain runs to 104 residues: L-rhamnose mutarotase (104 aa).

Y18 is a binding site for substrate. Residue H22 is the Proton donor of the active site. Residues Y41 and 76 to 77 (WW) contribute to the substrate site.

Belongs to the rhamnose mutarotase family. In terms of assembly, homodimer.

The protein resides in the cytoplasm. The catalysed reaction is alpha-L-rhamnose = beta-L-rhamnose. It functions in the pathway carbohydrate metabolism; L-rhamnose metabolism. Functionally, involved in the anomeric conversion of L-rhamnose. This chain is L-rhamnose mutarotase, found in Listeria monocytogenes serotype 4b (strain F2365).